The following is a 147-amino-acid chain: Large ribosomal subunit protein bL9 (147 aa).

It belongs to the bacterial ribosomal protein bL9 family.

Its function is as follows. Binds to the 23S rRNA. This chain is Large ribosomal subunit protein bL9, found in Marinomonas sp. (strain MWYL1).